The sequence spans 114 residues: Iron-sulfur cluster insertion protein ErpA (114 aa).

Iron-sulfur cluster-binding residues include C42, C106, and C108.

It belongs to the HesB/IscA family. In terms of assembly, homodimer. The cofactor is iron-sulfur cluster.

Its function is as follows. Required for insertion of 4Fe-4S clusters for at least IspG. The sequence is that of Iron-sulfur cluster insertion protein ErpA from Enterobacter sp. (strain 638).